A 427-amino-acid polypeptide reads, in one-letter code: 3-phosphoshikimate 1-carboxyvinyltransferase (427 aa).

3-phosphoshikimate-binding residues include lysine 22, serine 23, and arginine 27. Lysine 22 provides a ligand contact to phosphoenolpyruvate. Positions 96 and 124 each coordinate phosphoenolpyruvate. 7 residues coordinate 3-phosphoshikimate: serine 170, serine 171, glutamine 172, serine 199, aspartate 313, asparagine 336, and lysine 340. Glutamine 172 provides a ligand contact to phosphoenolpyruvate. The Proton acceptor role is filled by aspartate 313. Phosphoenolpyruvate-binding residues include arginine 344, arginine 386, and lysine 411.

It belongs to the EPSP synthase family. In terms of assembly, monomer.

The protein localises to the cytoplasm. It carries out the reaction 3-phosphoshikimate + phosphoenolpyruvate = 5-O-(1-carboxyvinyl)-3-phosphoshikimate + phosphate. Its pathway is metabolic intermediate biosynthesis; chorismate biosynthesis; chorismate from D-erythrose 4-phosphate and phosphoenolpyruvate: step 6/7. In terms of biological role, catalyzes the transfer of the enolpyruvyl moiety of phosphoenolpyruvate (PEP) to the 5-hydroxyl of shikimate-3-phosphate (S3P) to produce enolpyruvyl shikimate-3-phosphate and inorganic phosphate. The chain is 3-phosphoshikimate 1-carboxyvinyltransferase from Aeromonas salmonicida.